Reading from the N-terminus, the 237-residue chain is Purine nucleoside phosphorylase DeoD-type (237 aa).

Residue H4 participates in a purine D-ribonucleoside binding. Phosphate contacts are provided by residues G20, R24, R43, and 87–90 (RVGT). Residues 180–182 (EME) and 204–205 (SD) contribute to the a purine D-ribonucleoside site. D205 acts as the Proton donor in catalysis.

Belongs to the PNP/UDP phosphorylase family. As to quaternary structure, homohexamer; trimer of homodimers.

The catalysed reaction is a purine D-ribonucleoside + phosphate = a purine nucleobase + alpha-D-ribose 1-phosphate. It carries out the reaction a purine 2'-deoxy-D-ribonucleoside + phosphate = a purine nucleobase + 2-deoxy-alpha-D-ribose 1-phosphate. In terms of biological role, catalyzes the reversible phosphorolytic breakdown of the N-glycosidic bond in the beta-(deoxy)ribonucleoside molecules, with the formation of the corresponding free purine bases and pentose-1-phosphate. In Streptococcus suis (strain 98HAH33), this protein is Purine nucleoside phosphorylase DeoD-type.